The chain runs to 180 residues: Small ribosomal subunit protein uS5 (180 aa).

The disordered stretch occupies residues 1 to 20 (MAKMQGRMQGKVAPGDDRGD). Positions 22 to 85 (LKEKMVAINR…DEARRKMIKV (64 aa)) constitute an S5 DRBM domain.

This sequence belongs to the universal ribosomal protein uS5 family. Part of the 30S ribosomal subunit. Contacts proteins S4 and S8.

Its function is as follows. With S4 and S12 plays an important role in translational accuracy. Functionally, located at the back of the 30S subunit body where it stabilizes the conformation of the head with respect to the body. The protein is Small ribosomal subunit protein uS5 of Nitrosospira multiformis (strain ATCC 25196 / NCIMB 11849 / C 71).